We begin with the raw amino-acid sequence, 162 residues long: Large ribosomal subunit protein uL10 (162 aa).

The protein belongs to the universal ribosomal protein uL10 family. In terms of assembly, part of the ribosomal stalk of the 50S ribosomal subunit. The N-terminus interacts with L11 and the large rRNA to form the base of the stalk. The C-terminus forms an elongated spine to which L12 dimers bind in a sequential fashion forming a multimeric L10(L12)X complex.

Forms part of the ribosomal stalk, playing a central role in the interaction of the ribosome with GTP-bound translation factors. The protein is Large ribosomal subunit protein uL10 (rplJ) of Mycoplasma genitalium (strain ATCC 33530 / DSM 19775 / NCTC 10195 / G37) (Mycoplasmoides genitalium).